Here is a 376-residue protein sequence, read N- to C-terminus: Lactosylceramide 1,3-N-acetyl-beta-D-glucosaminyltransferase (376 aa).

Residues 1–13 (MRLFVSRRVKRWK) lie on the Cytoplasmic side of the membrane. Residues 14–34 (IFHFFVTCFILSFMVFWSPIN) traverse the membrane as a helical; Signal-anchor for type II membrane protein segment. Topologically, residues 35–376 (NYIMSHMKSY…NSYPCWAAFA (342 aa)) are lumenal. An N-linked (GlcNAc...) asparagine glycan is attached at asparagine 57.

This sequence belongs to the glycosyltransferase 31 family. In terms of tissue distribution, highly expressed in adult spleen, placenta and cerebellar Purkinje cells where it colocalizes with HNK-1. Expressed at lower level in brain, lung, thymus and muscle.

It localises to the golgi apparatus membrane. It catalyses the reaction a beta-D-Gal-(1-&gt;4)-beta-D-Glc-(1&lt;-&gt;1)-Cer(d18:1(4E)) + UDP-N-acetyl-alpha-D-glucosamine = a beta-D-GlcNAc-(1-&gt;3)-beta-D-Gal-(1-&gt;4)-beta-D-Glc-(1&lt;-&gt;1)-Cer(d18:1(4E)) + UDP + H(+). It carries out the reaction a neolactoside nLc4Cer(d18:1(4E)) + UDP-N-acetyl-alpha-D-glucosamine = a neolactoside IV(3)-beta-GlcNAc-nLc4Cer(d18:1(4E)) + UDP + H(+). It participates in protein modification; protein glycosylation. Beta-1,3-N-acetylglucosaminyltransferase that plays a key role in the synthesis of lacto- or neolacto-series carbohydrate chains on glycolipids, notably by participating in biosynthesis of HNK-1 and Lewis X carbohydrate structures. Has strong activity toward lactosylceramide (LacCer) and neolactotetraosylceramide (nLc(4)Cer; paragloboside), resulting in the synthesis of Lc(3)Cer and neolactopentaosylceramide (nLc(5)Cer), respectively. Plays a central role in regulating neolacto-series glycolipid synthesis during embryonic development. This Mus musculus (Mouse) protein is Lactosylceramide 1,3-N-acetyl-beta-D-glucosaminyltransferase.